A 279-amino-acid chain; its full sequence is Large ribosomal subunit protein uL2 (279 aa).

Residues 222 to 279 (GMAMNPVDHPMGGGEGKSKSGGGRRHPKSPWGQLAKGLKTRNKKKASQKLIVRGRNAK) are disordered. Residues 232-242 (MGGGEGKSKSG) show a composition bias toward gly residues. Basic residues predominate over residues 259 to 268 (LKTRNKKKAS).

Belongs to the universal ribosomal protein uL2 family. As to quaternary structure, part of the 50S ribosomal subunit. Forms a bridge to the 30S subunit in the 70S ribosome.

One of the primary rRNA binding proteins. Required for association of the 30S and 50S subunits to form the 70S ribosome, for tRNA binding and peptide bond formation. It has been suggested to have peptidyltransferase activity; this is somewhat controversial. Makes several contacts with the 16S rRNA in the 70S ribosome. The chain is Large ribosomal subunit protein uL2 from Chlorobium phaeobacteroides (strain DSM 266 / SMG 266 / 2430).